The following is a 366-amino-acid chain: tRNA/tmRNA (uracil-C(5))-methyltransferase (366 aa).

S-adenosyl-L-methionine-binding residues include Gln190, Tyr218, Asn223, Glu239, and Asp299. Cys324 acts as the Nucleophile in catalysis. The active-site Proton acceptor is the Glu358.

Belongs to the class I-like SAM-binding methyltransferase superfamily. RNA M5U methyltransferase family. TrmA subfamily.

The enzyme catalyses uridine(54) in tRNA + S-adenosyl-L-methionine = 5-methyluridine(54) in tRNA + S-adenosyl-L-homocysteine + H(+). It catalyses the reaction uridine(341) in tmRNA + S-adenosyl-L-methionine = 5-methyluridine(341) in tmRNA + S-adenosyl-L-homocysteine + H(+). Its function is as follows. Dual-specificity methyltransferase that catalyzes the formation of 5-methyluridine at position 54 (m5U54) in all tRNAs, and that of position 341 (m5U341) in tmRNA (transfer-mRNA). The polypeptide is tRNA/tmRNA (uracil-C(5))-methyltransferase (Shigella flexneri serotype 5b (strain 8401)).